The primary structure comprises 905 residues: MVSFGGIARKLFGSSNDRRVRSFQPNVAAINSIEEKTKALTDEQLAAKTVEFRALLAEGKTLDDILIPAFAVVREASRRVLGLRPFDVQLVGGMILHSNAIAEMKTGEGKTLVATLPVYLNALSGKGVHVVTVNDYLAQRDAATMGRVYSFLGMTTGVIVHGLSDEERHAAYACDITYATNNELGFDYLRDNMKYEKNQMVQRGHNFAIVDEVDSILVDEARTPLIISGPLDDRSELYNTIDAFIPLLVPSDYEIDEKQRSANFSEEGTEKLENLLRQAGLLKGNALYDIENVAIVHHVNNALKAHKLFQRDKDYIVRNDEVVIIDEFTGRMMPGRRYSEGQHQALEAKERVQIQPENQTLASITFQNYFRMYAKLAGMTGTAQTEAEEFANIYNLDVIEVPTNLPIKRIDEDDEVYRTFDEKFKAIIEEILDAHKRGQPVLVGTTSIEKSELLAERLRKQGFDDFQVLNARYHEQEAYIVAQAGVPGAITIATNMAGRGTDIQLGGNLDMRIERELGEVEAGPEREARIQAIVEEIKELKQKALAAGGLYVIATERHESRRIDNQLRGRSGRQGDPGRSKFYLSLQDDLMRIFGSDRMDSMLTKLGLKEGEAIVHPWINKALERAQKKVEARNFDIRKNLLKYDDVLNDQRKVIFEQRLELMESTNISETVSDMRREVIEDLVDKHIPERAYAEQWDAAGLKTGALNILNLDLPIEDWVKEEGIGEDDIRERLTQATNAAFTEKAERFGDDIMHYVERSIVMQTLDHLWREHIVNLDHLRSVIGFRGYAQRDPLQEYKSEAFELFTSLLNNLREAVTAQLMRVELVQQAPAEPEPPLMQAHHLDPTTGEDDFAPAIYQASEVIVSPENRNPDDPATWGKVGRNETCPCGSGKKYKHCHGAFEQV.

ATP contacts are provided by residues Gln89, 107–111 (GEGKT), and Asp502. Cys887, Cys889, Cys898, and His899 together coordinate Zn(2+).

The protein belongs to the SecA family. Monomer and homodimer. Part of the essential Sec protein translocation apparatus which comprises SecA, SecYEG and auxiliary proteins SecDF-YajC and YidC. It depends on Zn(2+) as a cofactor.

The protein localises to the cell inner membrane. It localises to the cytoplasm. It catalyses the reaction ATP + H2O + cellular proteinSide 1 = ADP + phosphate + cellular proteinSide 2.. In terms of biological role, part of the Sec protein translocase complex. Interacts with the SecYEG preprotein conducting channel. Has a central role in coupling the hydrolysis of ATP to the transfer of proteins into and across the cell membrane, serving both as a receptor for the preprotein-SecB complex and as an ATP-driven molecular motor driving the stepwise translocation of polypeptide chains across the membrane. The polypeptide is Protein translocase subunit SecA (Rhizobium leguminosarum bv. trifolii (strain WSM2304)).